The chain runs to 64 residues: Large ribosomal subunit protein bL28 (64 aa).

The protein belongs to the bacterial ribosomal protein bL28 family.

In Bifidobacterium longum (strain NCC 2705), this protein is Large ribosomal subunit protein bL28.